The primary structure comprises 164 residues: Cyanate hydratase (164 aa).

Catalysis depends on residues R104, E107, and S130.

It belongs to the cyanase family.

It carries out the reaction cyanate + hydrogencarbonate + 3 H(+) = NH4(+) + 2 CO2. Its function is as follows. Catalyzes the reaction of cyanate with bicarbonate to produce ammonia and carbon dioxide. This is Cyanate hydratase from Botryotinia fuckeliana (strain B05.10) (Noble rot fungus).